The chain runs to 197 residues: Recombination protein RecR (197 aa).

The C4-type zinc-finger motif lies at 56 to 71 (CQRCHSFSDEAVCPLC). Residues 79-174 (TLLCVVETAA…KVTRLAQGVP (96 aa)) form the Toprim domain.

The protein belongs to the RecR family.

May play a role in DNA repair. It seems to be involved in an RecBC-independent recombinational process of DNA repair. It may act with RecF and RecO. The protein is Recombination protein RecR of Psychrobacter cryohalolentis (strain ATCC BAA-1226 / DSM 17306 / VKM B-2378 / K5).